The chain runs to 193 residues: ATP-dependent Clp protease proteolytic subunit (193 aa).

The Nucleophile role is filled by Ser-98. His-123 is a catalytic residue.

It belongs to the peptidase S14 family. As to quaternary structure, fourteen ClpP subunits assemble into 2 heptameric rings which stack back to back to give a disk-like structure with a central cavity, resembling the structure of eukaryotic proteasomes.

Its subcellular location is the cytoplasm. It catalyses the reaction Hydrolysis of proteins to small peptides in the presence of ATP and magnesium. alpha-casein is the usual test substrate. In the absence of ATP, only oligopeptides shorter than five residues are hydrolyzed (such as succinyl-Leu-Tyr-|-NHMec, and Leu-Tyr-Leu-|-Tyr-Trp, in which cleavage of the -Tyr-|-Leu- and -Tyr-|-Trp bonds also occurs).. Functionally, cleaves peptides in various proteins in a process that requires ATP hydrolysis. Has a chymotrypsin-like activity. Plays a major role in the degradation of misfolded proteins. This is ATP-dependent Clp protease proteolytic subunit from Glaesserella parasuis serovar 5 (strain SH0165) (Haemophilus parasuis).